The following is a 392-amino-acid chain: Esterase EstB (392 aa).

S75 functions as the Acyl-ester intermediate in the catalytic mechanism.

The protein belongs to the class-A beta-lactamase family.

The protein resides in the cytoplasm. Strongly inhibited by eserin, NaF, HgCl2, SDS and Triton X-100. Its function is as follows. Acts on short-chain (C4-C6) fatty acid esters and triglycerides, including tertiary alcohol esters. Activity on p-nitrophenyl esters is generally higher than on o-nitrophenyl esters. Lacks beta-lactamase activity; it hydrolyzes the ester bond of cephalosporin substrates but there is no opening of the beta-lactam ring observed. This Burkholderia gladioli (Pseudomonas marginata) protein is Esterase EstB (estB).